A 337-amino-acid polypeptide reads, in one-letter code: Ornithine carbamoyltransferase, catabolic (337 aa).

Residues 57 to 60 (STRT), Q84, R108, and 135 to 138 (HPTQ) each bind carbamoyl phosphate. Residues N167, D231, and 235 to 236 (SM) each bind L-ornithine. Carbamoyl phosphate contacts are provided by residues 272-273 (CL) and R317.

Belongs to the aspartate/ornithine carbamoyltransferase superfamily. OTCase family.

The protein localises to the cytoplasm. The catalysed reaction is carbamoyl phosphate + L-ornithine = L-citrulline + phosphate + H(+). Its pathway is amino-acid degradation; L-arginine degradation via ADI pathway; carbamoyl phosphate from L-arginine: step 2/2. Functionally, reversibly catalyzes the transfer of the carbamoyl group from carbamoyl phosphate (CP) to the N(epsilon) atom of ornithine (ORN) to produce L-citrulline. This Streptococcus suis (strain 89/1591) protein is Ornithine carbamoyltransferase, catabolic.